A 352-amino-acid chain; its full sequence is Protein-glutamate methylesterase/protein-glutamine glutaminase 2 (352 aa).

Positions 1 to 116 constitute a Response regulatory domain; that stretch reads MIVDDSAIVR…KDFIQDAASD (116 aa). Aspartate 50 bears the 4-aspartylphosphate mark. In terms of domain architecture, CheB-type methylesterase spans 159–351; it reads SKTTEHVVAI…QEIMRYAHLK (193 aa). Catalysis depends on residues serine 171, histidine 197, and aspartate 293.

Belongs to the CheB family. Phosphorylated by CheA. Phosphorylation of the N-terminal regulatory domain activates the methylesterase activity.

It localises to the cytoplasm. The enzyme catalyses [protein]-L-glutamate 5-O-methyl ester + H2O = L-glutamyl-[protein] + methanol + H(+). It catalyses the reaction L-glutaminyl-[protein] + H2O = L-glutamyl-[protein] + NH4(+). In terms of biological role, involved in chemotaxis. Part of a chemotaxis signal transduction system that modulates chemotaxis in response to various stimuli. Catalyzes the demethylation of specific methylglutamate residues introduced into the chemoreceptors (methyl-accepting chemotaxis proteins or MCP) by CheR. Also mediates the irreversible deamidation of specific glutamine residues to glutamic acid. This Shewanella denitrificans (strain OS217 / ATCC BAA-1090 / DSM 15013) protein is Protein-glutamate methylesterase/protein-glutamine glutaminase 2.